A 592-amino-acid polypeptide reads, in one-letter code: Aspartate--tRNA(Asp/Asn) ligase (592 aa).

E173 is a binding site for L-aspartate. The interval 197–200 is aspartate; sequence QLFK. R219 contributes to the L-aspartate binding site. Residues 219-221 and Q228 each bind ATP; that span reads RDE. An L-aspartate-binding site is contributed by H448. E481 serves as a coordination point for ATP. Residue R488 participates in L-aspartate binding. 533–536 is an ATP binding site; the sequence is GLDR.

The protein belongs to the class-II aminoacyl-tRNA synthetase family. Type 1 subfamily. As to quaternary structure, homodimer.

It localises to the cytoplasm. It carries out the reaction tRNA(Asx) + L-aspartate + ATP = L-aspartyl-tRNA(Asx) + AMP + diphosphate. Its function is as follows. Aspartyl-tRNA synthetase with relaxed tRNA specificity since it is able to aspartylate not only its cognate tRNA(Asp) but also tRNA(Asn). Reaction proceeds in two steps: L-aspartate is first activated by ATP to form Asp-AMP and then transferred to the acceptor end of tRNA(Asp/Asn). The polypeptide is Aspartate--tRNA(Asp/Asn) ligase (Chromohalobacter salexigens (strain ATCC BAA-138 / DSM 3043 / CIP 106854 / NCIMB 13768 / 1H11)).